A 699-amino-acid polypeptide reads, in one-letter code: Keratinocyte proline-rich protein (699 aa).

A Phosphoserine modification is found at S436. Pro residues-rich tracts occupy residues 448 to 477 (PYPR…PSPE) and 513 to 533 (DPCP…PSPE). Residues 448-533 (PYPRPEPCPS…PCPEPCPSPE (86 aa)) are disordered.

Expressed in the stratified squamous epithelial layers of the skin, esophagus and tongue.

It is found in the cytoplasm. In Rattus norvegicus (Rat), this protein is Keratinocyte proline-rich protein (Kprp).